Reading from the N-terminus, the 434-residue chain is UPF0597 protein CLB_1949 (434 aa).

Belongs to the UPF0597 family.

The chain is UPF0597 protein CLB_1949 from Clostridium botulinum (strain ATCC 19397 / Type A).